Consider the following 528-residue polypeptide: Arginine--tRNA ligase (528 aa).

The short motif at Ala-112–His-122 is the 'HIGH' region element.

The protein belongs to the class-I aminoacyl-tRNA synthetase family. As to quaternary structure, monomer.

It localises to the cytoplasm. The catalysed reaction is tRNA(Arg) + L-arginine + ATP = L-arginyl-tRNA(Arg) + AMP + diphosphate. In Wolinella succinogenes (strain ATCC 29543 / DSM 1740 / CCUG 13145 / JCM 31913 / LMG 7466 / NCTC 11488 / FDC 602W) (Vibrio succinogenes), this protein is Arginine--tRNA ligase.